The following is a 407-amino-acid chain: Na(+)-translocating NADH-quinone reductase subunit F (407 aa).

The chain crosses the membrane as a helical span at residues 6 to 26 (IFLAIGMFTAIVLGLVAIILV). A 2Fe-2S ferredoxin-type domain is found at 35 to 127 (GDVTIQINGE…DMQIRVPEEV (93 aa)). [2Fe-2S] cluster contacts are provided by C70, C76, C79, and C111. The 140-residue stretch at 130–269 (VKKWECTVES…YGPFGEFFAK (140 aa)) folds into the FAD-binding FR-type domain. The catalytic stretch occupies residues 272–389 (EAEMVFIGGG…PMMNAAVIKM (118 aa)).

This sequence belongs to the NqrF family. As to quaternary structure, composed of six subunits; NqrA, NqrB, NqrC, NqrD, NqrE and NqrF. Requires [2Fe-2S] cluster as cofactor. The cofactor is FAD.

It is found in the cell inner membrane. The enzyme catalyses a ubiquinone + n Na(+)(in) + NADH + H(+) = a ubiquinol + n Na(+)(out) + NAD(+). Functionally, NQR complex catalyzes the reduction of ubiquinone-1 to ubiquinol by two successive reactions, coupled with the transport of Na(+) ions from the cytoplasm to the periplasm. The first step is catalyzed by NqrF, which accepts electrons from NADH and reduces ubiquinone-1 to ubisemiquinone by a one-electron transfer pathway. This chain is Na(+)-translocating NADH-quinone reductase subunit F, found in Pseudomonas aeruginosa (strain ATCC 15692 / DSM 22644 / CIP 104116 / JCM 14847 / LMG 12228 / 1C / PRS 101 / PAO1).